Reading from the N-terminus, the 604-residue chain is FAD-linked oxidoreductase easE (604 aa).

The first 25 residues, 1 to 25 (MQFLLWSTGLVALLSWLIYTQETQS), serve as a signal peptide directing secretion. Residues Asn-47, Asn-70, Asn-106, and Asn-196 are each glycosylated (N-linked (GlcNAc...) asparagine). The FAD-binding PCMH-type domain maps to 125–308 (QGRIPLFTVG…TRATMRVFPD (184 aa)).

It belongs to the oxygen-dependent FAD-linked oxidoreductase family. FAD serves as cofactor.

The protein operates within alkaloid biosynthesis; ergot alkaloid biosynthesis. Functionally, FAD-linked oxidoreductase; part of the gene cluster that mediates the biosynthesis of fungal ergot alkaloid. DmaW catalyzes the first step of ergot alkaloid biosynthesis by condensing dimethylallyl diphosphate (DMAP) and tryptophan to form 4-dimethylallyl-L-tryptophan. The second step is catalyzed by the methyltransferase easF that methylates 4-dimethylallyl-L-tryptophan in the presence of S-adenosyl-L-methionine, resulting in the formation of 4-dimethylallyl-L-abrine. The catalase easC and the FAD-dependent oxidoreductase easE then transform 4-dimethylallyl-L-abrine to chanoclavine-I which is further oxidized by easD in the presence of NAD(+), resulting in the formation of chanoclavine-I aldehyde. Chanoclavine-I aldehyde is the precursor of ergoamides and ergopeptines in Clavicipitaceae, and clavine-type alcaloids such as fumiclavine in Trichocomaceae. However, the metabolites downstream of chanoclavine-I aldehyde in Arthrodermataceae have not been identified yet. The polypeptide is FAD-linked oxidoreductase easE (Trichophyton verrucosum (strain HKI 0517)).